A 271-amino-acid chain; its full sequence is Ribosomal RNA small subunit methyltransferase A (271 aa).

The S-adenosyl-L-methionine site is built by Asn19, Leu21, Gly46, Glu67, Asp92, and Asn113.

Belongs to the class I-like SAM-binding methyltransferase superfamily. rRNA adenine N(6)-methyltransferase family. RsmA subfamily.

The protein localises to the cytoplasm. The enzyme catalyses adenosine(1518)/adenosine(1519) in 16S rRNA + 4 S-adenosyl-L-methionine = N(6)-dimethyladenosine(1518)/N(6)-dimethyladenosine(1519) in 16S rRNA + 4 S-adenosyl-L-homocysteine + 4 H(+). Its function is as follows. Specifically dimethylates two adjacent adenosines (A1518 and A1519) in the loop of a conserved hairpin near the 3'-end of 16S rRNA in the 30S particle. May play a critical role in biogenesis of 30S subunits. The protein is Ribosomal RNA small subunit methyltransferase A of Photobacterium profundum (strain SS9).